We begin with the raw amino-acid sequence, 877 residues long: Ewing's tumor-associated antigen 1 homolog (877 aa).

Residues 1–82 (MQLKDGGTGM…GRSPRGKETP (82 aa)) form a disordered region. The segment covering 56 to 65 (AGTRSARRAQ) has biased composition (basic residues). A Glycyl lysine isopeptide (Lys-Gly) (interchain with G-Cter in SUMO2) cross-link involves residue Lys-87. The ATR-activation domain (AAD) signature appears at 107–113 (IFWDQNS). 2 coiled-coil regions span residues 185–213 (KTKN…IQEQ) and 306–335 (AFLN…LLTE). Residues Lys-416 and Lys-444 each participate in a glycyl lysine isopeptide (Lys-Gly) (interchain with G-Cter in SUMO2) cross-link. Positions 450–479 (PSKTRNGELRNAGEHRFSSHPGDESRKVPF) are disordered. A compositionally biased stretch (basic and acidic residues) spans 454 to 476 (RNGELRNAGEHRFSSHPGDESRK). A Phosphoserine modification is found at Ser-467. Lys-510 participates in a covalent cross-link: Glycyl lysine isopeptide (Lys-Gly) (interchain with G-Cter in SUMO2). An RBM1 motif motif is present at residues 607–622 (GEVDDDLFCQACDDIE). 2 disordered regions span residues 626-664 (QQEN…PSKH) and 818-877 (ANQQ…ISLP). Low complexity predominate over residues 637-662 (SVSYTSTRGSRSSSTASKQASQSAPS). Residues 818-833 (ANQQQSSINYSESLKP) show a composition bias toward polar residues. Basic and acidic residues predominate over residues 840 to 859 (ERNRKYSPEEIQRKRQEALV). The short motif at 843-865 (RKYSPEEIQRKRQEALVRRKAKA) is the RBM2 motif element. Residues 868–877 (TVQSAPISLP) are compositionally biased toward polar residues.

As to quaternary structure, interacts (via RBM1 motif) with RPA1. Interacts (via RBM2 motif) with RPA2. Interacts (via the ATR-activation domain motif) with ATR. Phosphorylated by ATR.

The protein resides in the nucleus. In terms of biological role, replication stress response protein that accumulates at DNA damage sites and promotes replication fork progression and integrity. Recruited to stalled replication forks via interaction with the RPA complex and directly stimulates ATR kinase activity independently of TOPBP1. Probably only regulates a subset of ATR targets. This Mus musculus (Mouse) protein is Ewing's tumor-associated antigen 1 homolog.